The sequence spans 148 residues: Cytochrome c oxidase subunit 4, mitochondrial (148 aa).

The N-terminal 24 residues, 1–24 (MFALRSIRSATKAFQTTSIVSQRG), are a transit peptide targeting the mitochondrion.

As to quaternary structure, slime mold cytochrome c oxidase consists of at least seven different polypeptides species, subunits I, II, III, IV, V, VI, and VIIe/s in order of MW.

The protein resides in the mitochondrion inner membrane. The enzyme catalyses 4 Fe(II)-[cytochrome c] + O2 + 8 H(+)(in) = 4 Fe(III)-[cytochrome c] + 2 H2O + 4 H(+)(out). This protein is one of the nuclear-coded polypeptide chains of cytochrome c oxidase, the terminal oxidase in mitochondrial electron transport. The sequence is that of Cytochrome c oxidase subunit 4, mitochondrial (cxdA) from Dictyostelium discoideum (Social amoeba).